Here is a 265-residue protein sequence, read N- to C-terminus: uncharacterized protein (265 aa).

Positions 7, 9, 95, 131, 156, and 206 each coordinate a divalent metal cation.

This sequence belongs to the metallo-dependent hydrolases superfamily. TatD-type hydrolase family. The cofactor is a divalent metal cation.

This is an uncharacterized protein from Buchnera aphidicola subsp. Baizongia pistaciae (strain Bp).